Consider the following 675-residue polypeptide: Methionine--tRNA ligase (675 aa).

A 'HIGH' region motif is present at residues 15 to 25 (PYANGSIHLGH). Residues Cys-146, Cys-149, Cys-159, and Cys-162 each coordinate Zn(2+). The 'KMSKS' region signature appears at 332–336 (KMSKS). Lys-335 serves as a coordination point for ATP. Positions 573–675 (DFAKVDMRIA…SGAQPGMQVK (103 aa)) constitute a tRNA-binding domain.

It belongs to the class-I aminoacyl-tRNA synthetase family. MetG type 1 subfamily. In terms of assembly, homodimer. Zn(2+) serves as cofactor.

It is found in the cytoplasm. It catalyses the reaction tRNA(Met) + L-methionine + ATP = L-methionyl-tRNA(Met) + AMP + diphosphate. Its function is as follows. Is required not only for elongation of protein synthesis but also for the initiation of all mRNA translation through initiator tRNA(fMet) aminoacylation. This is Methionine--tRNA ligase from Yersinia pseudotuberculosis serotype IB (strain PB1/+).